A 967-amino-acid polypeptide reads, in one-letter code: uncharacterized protein (967 aa).

2 disordered regions span residues 1–23 (MQNA…FHDR) and 41–72 (FTMH…DPRT). Residues 14-23 (KGRDVNFHDR) are compositionally biased toward basic and acidic residues. The span at 60–72 (RLSNYSSAVDPRT) shows a compositional bias: polar residues. Position 86 is a phosphoserine (Ser86). Disordered regions lie at residues 135-259 (AVSE…QHLP), 271-296 (SVSR…SPPE), 380-399 (DSTT…APHK), 437-464 (HSYG…FVAD), and 499-544 (GTRF…KSLS). Residues 162-187 (ESSTSNNLETGNSTNTALHNVSSPLE) are compositionally biased toward polar residues. The segment covering 205 to 218 (HDLDEVISEKDTSL) has biased composition (basic and acidic residues). Over residues 221 to 234 (RSSRGRSSAPKRRK) the composition is skewed to basic residues. Over residues 278 to 294 (SPASTPRSSVSSVSSSP) the composition is skewed to low complexity. The span at 382–394 (TTEYVNTESSSKT) shows a compositional bias: polar residues. The span at 499 to 508 (GTRFHSRSSH) shows a compositional bias: basic residues. At Ser585 the chain carries Phosphoserine. 2 disordered regions span residues 594 to 665 (ESNE…SVND) and 681 to 708 (DHRI…ESQH). Residues 608–622 (YDSRESTGHTIKELR) show a composition bias toward basic and acidic residues. Low complexity predominate over residues 686–704 (ASDNQNNNNNDANALAENS). 728–736 (PCVLDVKMG) serves as a coordination point for substrate.

It belongs to the inositol phosphokinase (IPK) family.

It is found in the cytoplasm. This is an uncharacterized protein from Schizosaccharomyces pombe (strain 972 / ATCC 24843) (Fission yeast).